The primary structure comprises 549 residues: MKRVLTALAATLPFAANAADAISGAVERQPTNWQAIIMFLIFVVFTLGITYWASKRVRSRSDYYTAGGNITGFQNGLAIAGDYMSAASFLGISALVFTSGYDGLIYSLGFLVGWPIILFLIAERLRNLGRYTFADVASYRLKQGPIRILSACGSLVVVALYLIAQMVGAGKLIELLFGLNYHIAVVLVGVLMMMYVLFGGMLATTWVQIIKAVLLLFGASFMAFMVMKHVGFSFNNLFSEAMAVHPKGVDIMKPGGLVKDPISALSLGLGLMFGTAGLPHILMRFFTVSDAREARKSVFYATGFMGYFYILTFIIGFGAIMLVGANPEYKDAAGHLIGGNNMAAVHLANAVGGNLFLGFISAVAFATILAVVAGLTLAGASAVSHDLYANVFKKGATEREELRVSKITVLILGVIAIILGVLFENQNIAFMVGLAFAIAASCNFPIILLSMYWSKLTTRGAMMGGWLGLITAVVLMILGPTIWVQILGHEKAIFPYEYPALFSITVAFLGIWFFSATDNSAEGARERELFRAQFIRSQTGFGVEQGRAH.

The next 13 membrane-spanning stretches (helical) occupy residues 33–53 (WQAIIMFLIFVVFTLGITYWA), 77–97 (LAIAGDYMSAASFLGISALVF), 103–123 (GLIYSLGFLVGWPIILFLIAE), 148–168 (ILSACGSLVVVALYLIAQMVG), 183–203 (IAVVLVGVLMMMYVLFGGMLA), 206–226 (WVQIIKAVLLLFGASFMAFMV), 262–282 (ISALSLGLGLMFGTAGLPHIL), 303–323 (GFMGYFYILTFIIGFGAIMLV), 355–375 (LFLGFISAVAFATILAVVAGL), 404–424 (VSKITVLILGVIAIILGVLFE), 428–448 (IAFMVGLAFAIAASCNFPIIL), 464–484 (GGWLGLITAVVLMILGPTIWV), and 493–513 (IFPYEYPALFSITVAFLGIWF).

This sequence belongs to the sodium:solute symporter (SSF) (TC 2.A.21) family.

It is found in the cell inner membrane. In terms of biological role, transports acetate. The chain is Cation/acetate symporter ActP from Escherichia coli (strain ATCC 8739 / DSM 1576 / NBRC 3972 / NCIMB 8545 / WDCM 00012 / Crooks).